The following is a 345-amino-acid chain: RNA polymerase II holoenzyme cyclin-like subunit (345 aa).

A Cyclin N-terminal domain is found at 53-144 (QQINRLGKRM…IGECEFYLIS (92 aa)). The interval 256–285 (GLTPQSSSGLQAMLPPQSPAGEGPAEGNKN) is disordered.

This sequence belongs to the cyclin family. Cyclin C subfamily. Component of the srb8-11 complex, a regulatory module of the Mediator complex.

It is found in the nucleus. In terms of biological role, component of the srb8-11 complex. The srb8-11 complex is a regulatory module of the Mediator complex which is itself involved in regulation of basal and activated RNA polymerase II-dependent transcription. The srb8-11 complex may be involved in the transcriptional repression of a subset of genes regulated by Mediator. It may inhibit the association of the Mediator complex with RNA polymerase II to form the holoenzyme complex. The srb8-11 complex phosphorylates the C-terminal domain (CTD) of the largest subunit of RNA polymerase II. The protein is RNA polymerase II holoenzyme cyclin-like subunit (ssn8) of Neurospora crassa (strain ATCC 24698 / 74-OR23-1A / CBS 708.71 / DSM 1257 / FGSC 987).